A 587-amino-acid chain; its full sequence is Aspartate--tRNA ligase (587 aa).

Glu-173 is an L-aspartate binding site. An aspartate region spans residues Gln-197–Lys-200. Position 219 (Arg-219) interacts with L-aspartate. ATP is bound by residues Arg-219–Glu-221 and Gln-228. His-446 contributes to the L-aspartate binding site. Glu-480 is an ATP binding site. Residue Arg-487 coordinates L-aspartate. ATP is bound at residue Gly-532–Arg-535.

It belongs to the class-II aminoacyl-tRNA synthetase family. Type 1 subfamily. As to quaternary structure, homodimer.

Its subcellular location is the cytoplasm. It carries out the reaction tRNA(Asp) + L-aspartate + ATP = L-aspartyl-tRNA(Asp) + AMP + diphosphate. Functionally, catalyzes the attachment of L-aspartate to tRNA(Asp) in a two-step reaction: L-aspartate is first activated by ATP to form Asp-AMP and then transferred to the acceptor end of tRNA(Asp). In Phocaeicola vulgatus (strain ATCC 8482 / DSM 1447 / JCM 5826 / CCUG 4940 / NBRC 14291 / NCTC 11154) (Bacteroides vulgatus), this protein is Aspartate--tRNA ligase.